Here is a 250-residue protein sequence, read N- to C-terminus: Manganese transport system ATP-binding protein MntB (250 aa).

Residues 5–236 form the ABC transporter domain; sequence VKVDNLSVFY…MVAKTYQGNL (232 aa). 37–44 contacts ATP; sequence GPNGAGKS.

It belongs to the ABC transporter superfamily.

It localises to the cell membrane. Its function is as follows. This protein is probably a component of a manganese permease, a binding protein-dependent, ATP-driven transport system. Probably responsible for energy coupling to the transport system. In Halalkalibacterium halodurans (strain ATCC BAA-125 / DSM 18197 / FERM 7344 / JCM 9153 / C-125) (Bacillus halodurans), this protein is Manganese transport system ATP-binding protein MntB (mntB).